Here is a 130-residue protein sequence, read N- to C-terminus: Biotin carboxyl carrier protein (130 aa).

The segment at 20-64 is disordered; it reads EISESSVPAATPITPTTENTRAASDQKQQSQTPSPAATASAANTM. The segment covering 23–46 has biased composition (polar residues); sequence ESSVPAATPITPTTENTRAASDQK. Residues 47–64 show a composition bias toward low complexity; the sequence is QQSQTPSPAATASAANTM. In terms of domain architecture, Biotinyl-binding spans 55–130; the sequence is AATASAANTM…NAGDNLITIA (76 aa). K96 is modified (N6-biotinyllysine).

This is Biotin carboxyl carrier protein (bcc) from Streptococcus mutans serotype c (strain ATCC 700610 / UA159).